The chain runs to 81 residues: Spore coat protein F-like protein YraG (81 aa).

It belongs to the CotF family.

It is found in the spore coat. This is Spore coat protein F-like protein YraG (yraG) from Bacillus subtilis (strain 168).